The chain runs to 383 residues: Dephospho-CoA kinase (383 aa).

A DPCK domain is found at 3–201 (RIGLTGGMGA…RRLVPFERNL (199 aa)). 11–16 (GAGKST) is an ATP binding site. The interval 196–383 (PFERNLRAAT…EVAERLLGTV (188 aa)) is UPF0157.

This sequence in the N-terminal section; belongs to the CoaE family. It in the C-terminal section; belongs to the UPF0157 (GrpB) family.

The protein localises to the cytoplasm. It catalyses the reaction 3'-dephospho-CoA + ATP = ADP + CoA + H(+). It participates in cofactor biosynthesis; coenzyme A biosynthesis; CoA from (R)-pantothenate: step 5/5. In terms of biological role, catalyzes the phosphorylation of the 3'-hydroxyl group of dephosphocoenzyme A to form coenzyme A. The sequence is that of Dephospho-CoA kinase from Nocardia farcinica (strain IFM 10152).